Reading from the N-terminus, the 403-residue chain is Peroxisomal membrane protein PEX13 (403 aa).

Residues 1–11 (MASQPPPPPKP) show a composition bias toward pro residues. The segment at 1 to 69 (MASQPPPPPK…SQQTGGNNVN (69 aa)) is disordered. Topologically, residues 1-134 (MASQPPPPPK…SSRGAFQSIE (134 aa)) are peroxisomal matrix. Residues 59–69 (PSQQTGGNNVN) are compositionally biased toward polar residues. A helical membrane pass occupies residues 135-155 (SIVHAFASVSMMMDATFSAVY). Residues 145–233 (MMMDATFSAV…EDQANNSAKS (89 aa)) form a targeting to peroxisomes region. Over 156–174 (NSFRAVLDVANHFSRLKIH) the chain is Cytoplasmic. The chain crosses the membrane as a helical span at residues 175–192 (FTKVFSAFALVRTIRYLY). An interaction with PEX19 region spans residues 175–196 (FTKVFSAFALVRTIRYLYRRLQ). Over 193–233 (RRLQWMMGLRRGSENEDLWAESEGTVACLGAEDQANNSAKS) the chain is Peroxisomal matrix. The chain crosses the membrane as a helical span at residues 234–254 (WPIFLFFAVILGGPYLIWKLL). Over 255–403 (STHSDEVTDS…TGKNGDKQDL (149 aa)) the chain is Cytoplasmic. The 65-residue stretch at 272-336 (DDHVVARAEY…PANYVKILGK (65 aa)) folds into the SH3 domain. 2 disordered regions span residues 341 to 364 (KTVE…VKGV) and 381 to 403 (FVET…KQDL). A compositionally biased stretch (polar residues) spans 344-364 (ESSTMPKQQQSFTNPTSVKGV).

The protein belongs to the peroxin-13 family. Interacts (via SH3 domain) with PEX14 (via SH3-binding motif); forming the PEX13-PEX14 docking complex. Interacts with PEX19.

It localises to the peroxisome membrane. In terms of biological role, component of the PEX13-PEX14 docking complex, a translocon channel that specifically mediates the import of peroxisomal cargo proteins bound to PEX5 receptor. The PEX13-PEX14 docking complex forms a large import pore which can be opened to a diameter of about 9 nm. Mechanistically, PEX5 receptor along with cargo proteins associates with the PEX14 subunit of the PEX13-PEX14 docking complex in the cytosol, leading to the insertion of the receptor into the organelle membrane with the concomitant translocation of the cargo into the peroxisome matrix. Involved in the import of PTS1- and PTS2-type containing proteins. In Rattus norvegicus (Rat), this protein is Peroxisomal membrane protein PEX13.